Reading from the N-terminus, the 629-residue chain is Probable alpha-L-arabinofuranosidase A (629 aa).

The first 25 residues, methionine 1–glycine 25, serve as a signal peptide directing secretion. 9 N-linked (GlcNAc...) asparagine glycosylation sites follow: asparagine 36, asparagine 51, asparagine 140, asparagine 152, asparagine 168, asparagine 171, asparagine 260, asparagine 494, and asparagine 534.

This sequence belongs to the glycosyl hydrolase 51 family.

The protein localises to the secreted. It catalyses the reaction Hydrolysis of terminal non-reducing alpha-L-arabinofuranoside residues in alpha-L-arabinosides.. It participates in glycan metabolism; L-arabinan degradation. Its function is as follows. Alpha-L-arabinofuranosidase involved in the degradation of arabinoxylan, a major component of plant hemicellulose. Acts only on small linear 1,5-alpha-linked L-arabinofuranosyl oligosaccharides. The sequence is that of Probable alpha-L-arabinofuranosidase A (abfA) from Aspergillus oryzae (strain ATCC 42149 / RIB 40) (Yellow koji mold).